The following is a 352-amino-acid chain: Ion-translocating oxidoreductase complex subunit D (352 aa).

The next 4 membrane-spanning stretches (helical) occupy residues 20 to 40 (IMLL…WFFG), 42 to 62 (GTLF…AIVL), 69 to 91 (VASH…SIPP), and 123 to 143 (PAMI…TSWL). Thr187 carries the FMN phosphoryl threonine modification. 5 consecutive transmembrane segments (helical) span residues 215 to 235 (LAGV…VFLL), 242 to 262 (WHIP…GWLF), 267 to 287 (LASP…FFIL), 301 to 321 (LIFG…GGYP), and 322 to 342 (DGVA…DYYT).

It belongs to the NqrB/RnfD family. As to quaternary structure, the complex is composed of six subunits: RsxA, RsxB, RsxC, RsxD, RsxE and RsxG. It depends on FMN as a cofactor.

The protein localises to the cell inner membrane. In terms of biological role, part of a membrane-bound complex that couples electron transfer with translocation of ions across the membrane. Required to maintain the reduced state of SoxR. This Salmonella choleraesuis (strain SC-B67) protein is Ion-translocating oxidoreductase complex subunit D.